The chain runs to 293 residues: Protease HtpX (293 aa).

Helical transmembrane passes span 4–24 (ISLFLLTNLAVMVVFGIVLSL) and 33–53 (AGLMIMAGLFGFGGAFVSLLM). Residue His139 participates in Zn(2+) binding. Residue Glu140 is part of the active site. Position 143 (His143) interacts with Zn(2+). 2 helical membrane-spanning segments follow: residues 158-178 (VVNTFVIFISRILAQLAAGFM) and 193-213 (LVYFAVSMVLELVFGVLASII). Glu222 provides a ligand contact to Zn(2+).

It belongs to the peptidase M48B family. Zn(2+) serves as cofactor.

It is found in the cell inner membrane. The protein is Protease HtpX of Sodalis glossinidius (strain morsitans).